Here is a 264-residue protein sequence, read N- to C-terminus: Indole-3-glycerol phosphate synthase (264 aa).

The protein belongs to the TrpC family.

It catalyses the reaction 1-(2-carboxyphenylamino)-1-deoxy-D-ribulose 5-phosphate + H(+) = (1S,2R)-1-C-(indol-3-yl)glycerol 3-phosphate + CO2 + H2O. It functions in the pathway amino-acid biosynthesis; L-tryptophan biosynthesis; L-tryptophan from chorismate: step 4/5. This is Indole-3-glycerol phosphate synthase from Carboxydothermus hydrogenoformans (strain ATCC BAA-161 / DSM 6008 / Z-2901).